The chain runs to 257 residues: Small ribosomal subunit protein uS15m (257 aa).

A mitochondrion-targeting transit peptide spans M1–K57. The tract at residues R225–Q257 is disordered.

The protein belongs to the universal ribosomal protein uS15 family. Component of the mitochondrial small ribosomal subunit (mt-SSU). Mature mammalian 55S mitochondrial ribosomes consist of a small (28S) and a large (39S) subunit. The 28S small subunit contains a 12S ribosomal RNA (12S mt-rRNA) and 30 different proteins. The 39S large subunit contains a 16S rRNA (16S mt-rRNA), a copy of mitochondrial valine transfer RNA (mt-tRNA(Val)), which plays an integral structural role, and 52 different proteins. Interacts with METTL17.

Its subcellular location is the mitochondrion matrix. This is Small ribosomal subunit protein uS15m (MRPS15) from Homo sapiens (Human).